The primary structure comprises 488 residues: Ribulose bisphosphate carboxylase large chain 1 (488 aa).

Asn128 and Thr178 together coordinate substrate. The active-site Proton acceptor is Lys180. Lys182 contacts substrate. Residues Lys206, Asp208, and Glu209 each contribute to the Mg(2+) site. Lys206 carries the N6-carboxylysine modification. Catalysis depends on His298, which acts as the Proton acceptor. Positions 299, 331, and 383 each coordinate substrate.

The protein belongs to the RuBisCO large chain family. Type I subfamily. As to quaternary structure, heterohexadecamer of 8 large chains and 8 small chains. It depends on Mg(2+) as a cofactor.

It carries out the reaction 2 (2R)-3-phosphoglycerate + 2 H(+) = D-ribulose 1,5-bisphosphate + CO2 + H2O. The catalysed reaction is D-ribulose 1,5-bisphosphate + O2 = 2-phosphoglycolate + (2R)-3-phosphoglycerate + 2 H(+). RuBisCO catalyzes two reactions: the carboxylation of D-ribulose 1,5-bisphosphate, the primary event in carbon dioxide fixation, as well as the oxidative fragmentation of the pentose substrate. Both reactions occur simultaneously and in competition at the same active site. The polypeptide is Ribulose bisphosphate carboxylase large chain 1 (Nitrobacter hamburgensis (strain DSM 10229 / NCIMB 13809 / X14)).